The sequence spans 96 residues: UPF0235 protein Sputcn32_2690 (96 aa).

It belongs to the UPF0235 family.

The chain is UPF0235 protein Sputcn32_2690 from Shewanella putrefaciens (strain CN-32 / ATCC BAA-453).